A 160-amino-acid chain; its full sequence is Endoribonuclease YbeY (160 aa).

3 residues coordinate Zn(2+): histidine 125, histidine 129, and histidine 135.

Belongs to the endoribonuclease YbeY family. Zn(2+) serves as cofactor.

The protein localises to the cytoplasm. Single strand-specific metallo-endoribonuclease involved in late-stage 70S ribosome quality control and in maturation of the 3' terminus of the 16S rRNA. In Dehalococcoides mccartyi (strain ATCC BAA-2100 / JCM 16839 / KCTC 5957 / BAV1), this protein is Endoribonuclease YbeY.